We begin with the raw amino-acid sequence, 279 residues long: DNA repair protein RecO (279 aa).

Belongs to the RecO family.

Functionally, involved in DNA repair and RecF pathway recombination. The polypeptide is DNA repair protein RecO (Thermosynechococcus vestitus (strain NIES-2133 / IAM M-273 / BP-1)).